The sequence spans 419 residues: UDP-N-acetylglucosamine 1-carboxyvinyltransferase (419 aa).

Residue 22–23 (KN) coordinates phosphoenolpyruvate. R91 contacts UDP-N-acetyl-alpha-D-glucosamine. C115 acts as the Proton donor in catalysis. C115 is subject to 2-(S-cysteinyl)pyruvic acid O-phosphothioketal. UDP-N-acetyl-alpha-D-glucosamine-binding positions include 120 to 124 (RPVDL), 160 to 163 (KVSV), D305, and I327.

This sequence belongs to the EPSP synthase family. MurA subfamily.

It localises to the cytoplasm. It catalyses the reaction phosphoenolpyruvate + UDP-N-acetyl-alpha-D-glucosamine = UDP-N-acetyl-3-O-(1-carboxyvinyl)-alpha-D-glucosamine + phosphate. It participates in cell wall biogenesis; peptidoglycan biosynthesis. Its function is as follows. Cell wall formation. Adds enolpyruvyl to UDP-N-acetylglucosamine. The sequence is that of UDP-N-acetylglucosamine 1-carboxyvinyltransferase from Citrobacter koseri (strain ATCC BAA-895 / CDC 4225-83 / SGSC4696).